Consider the following 188-residue polypeptide: Probable nicotinate-nucleotide adenylyltransferase (188 aa).

This sequence belongs to the NadD family.

The enzyme catalyses nicotinate beta-D-ribonucleotide + ATP + H(+) = deamido-NAD(+) + diphosphate. It functions in the pathway cofactor biosynthesis; NAD(+) biosynthesis; deamido-NAD(+) from nicotinate D-ribonucleotide: step 1/1. Its function is as follows. Catalyzes the reversible adenylation of nicotinate mononucleotide (NaMN) to nicotinic acid adenine dinucleotide (NaAD). The sequence is that of Probable nicotinate-nucleotide adenylyltransferase from Sulfurovum sp. (strain NBC37-1).